Reading from the N-terminus, the 372-residue chain is MLRTIKSPIKVIVRPASASASANAEKLDEIRERLAKGPSFQDFIQNPNNTKNEWDNYDGKLRREKVEEQRLRLPPWLKTTIPMGKNYAKIKDQLRELKLSTVCEEARCPNIGECWGGGEHGTQTATIMLMGDTCTRGCRFCSVKTARAPPPLDENEPVNTAKAVASWGLDYIVLTSVDRDDLSDGGSKHIAQTVKEIKARNQNIFVECLVPDFRGDLECVKTIANCGLDVYAHNIETVEKLTPFVRDRRAHYRQTLKVLSEAKRFNPNLITKSSIMLGLGETDAEVEQTMLDLREVGVECLTLGQYMQPTKKHLKVIEYVTPEKFKHWEERGNQLGFLYTASGPLVRSSYKAGEFFITSILANRKKQNDAPK.

7 residues coordinate [4Fe-4S] cluster: Cys-103, Cys-108, Cys-114, Cys-134, Cys-138, Cys-141, and Ser-349. One can recognise a Radical SAM core domain in the interval Glu-119–Leu-338.

The protein belongs to the radical SAM superfamily. Lipoyl synthase family. Requires [4Fe-4S] cluster as cofactor.

The protein localises to the mitochondrion. It catalyses the reaction [[Fe-S] cluster scaffold protein carrying a second [4Fe-4S](2+) cluster] + N(6)-octanoyl-L-lysyl-[protein] + 2 oxidized [2Fe-2S]-[ferredoxin] + 2 S-adenosyl-L-methionine + 4 H(+) = [[Fe-S] cluster scaffold protein] + N(6)-[(R)-dihydrolipoyl]-L-lysyl-[protein] + 4 Fe(3+) + 2 hydrogen sulfide + 2 5'-deoxyadenosine + 2 L-methionine + 2 reduced [2Fe-2S]-[ferredoxin]. It participates in protein modification; protein lipoylation via endogenous pathway; protein N(6)-(lipoyl)lysine from octanoyl-[acyl-carrier-protein]: step 2/2. Its function is as follows. Catalyzes the radical-mediated insertion of two sulfur atoms into the C-6 and C-8 positions of the octanoyl moiety bound to the lipoyl domains of lipoate-dependent enzymes, thereby converting the octanoylated domains into lipoylated derivatives. The protein is Lipoyl synthase, mitochondrial of Drosophila willistoni (Fruit fly).